The primary structure comprises 355 residues: Myosin-binding protein H-like (355 aa).

Polar residues-rich tracts occupy residues 1–16 (META…SQRQ) and 31–41 (TSHQQEAGSPS). Residues 1-41 (METATTLEIASCSQRQVEAAADPADAKGPRTSHQQEAGSPS) are disordered. Ser39 carries the post-translational modification Phosphoserine. Residues 46–140 (PSIEEHPKIW…GGLQATATIN (95 aa)) enclose the Ig-like C2-type 1 domain. One can recognise a Fibronectin type-III domain in the interval 149-244 (PPQSIKLVDV…TADLAHIQKA (96 aa)). The Ig-like C2-type 2 domain occupies 262-346 (PKFTQPLADC…INALGEASVD (85 aa)). Cys283 and Cys334 are oxidised to a cystine. An Omega-N-methylarginine modification is found at Arg322.

The protein belongs to the immunoglobulin superfamily. MyBP family. As to expression, expressed in the atria as well as in discrete puncta throughout the right ventricular wall and septum.

The protein localises to the cytoplasm. Its subcellular location is the myofibril. It localises to the sarcomere. Functionally, myosin-binding protein which plays a role in cardiac function. Seems to regulate conduction in the atria and ventricular conduction systems. The sequence is that of Myosin-binding protein H-like from Mus musculus (Mouse).